The primary structure comprises 2238 residues: Protein Ycf2 (2238 aa).

Glycine 1579–serine 1586 contacts ATP.

Belongs to the Ycf2 family.

The protein resides in the plastid. Its function is as follows. Probable ATPase of unknown function. Its presence in a non-photosynthetic plant (Epifagus virginiana) and experiments in tobacco indicate that it has an essential function which is probably not related to photosynthesis. This is Protein Ycf2 from Cuscuta exaltata (Tall dodder).